Reading from the N-terminus, the 181-residue chain is TATA-box-binding protein (181 aa).

2 tandem repeats follow at residues 7–83 (IVNV…MEYL) and 98–173 (VQNM…KNTV).

It belongs to the TBP family.

Its function is as follows. General factor that plays a role in the activation of archaeal genes transcribed by RNA polymerase. Binds specifically to the TATA box promoter element which lies close to the position of transcription initiation. This chain is TATA-box-binding protein, found in Methanococcus aeolicus (strain ATCC BAA-1280 / DSM 17508 / OCM 812 / Nankai-3).